The following is a 257-amino-acid chain: Major prion protein (257 aa).

The signal sequence occupies residues 1–24 (MVKSHIGSWLLVLFVATWSDIGFC). The tract at residues 25 to 41 (KKRPKPGGGWNTGGSRY) is interaction with ADGRG6. The interval 25-234 (KKRPKPGGGW…ESEAYYQRGA (210 aa)) is interaction with GRB2, ERI3 and SYN1. Residues 27 to 114 (RPKPGGGWNT…KPSKPKTNMK (88 aa)) are disordered. 5 tandem repeats follow at residues 54–62 (PQGGGGWGQ), 63–70 (PHGGGWGQ), 71–78 (PHGGGWGQ), 79–86 (PHGGGWGQ), and 87–95 (PHGGGGWGQ). The segment at 54 to 95 (PQGGGGWGQPHGGGWGQPHGGGWGQPHGGGWGQPHGGGGWGQ) is 5 X 8 AA tandem repeats of P-H-G-G-G-W-G-Q. Residues 55-101 (QGGGGWGQPHGGGWGQPHGGGWGQPHGGGWGQPHGGGGWGQGGGSHG) are compositionally biased toward gly residues. Positions 64, 65, 66, 72, 73, 74, 80, 81, 82, 88, 90, and 91 each coordinate Cu(2+). Cys-183 and Cys-218 are joined by a disulfide. Asn-185 and Asn-201 each carry an N-linked (GlcNAc...) asparagine glycan. Ala-234 carries GPI-anchor amidated alanine lipidation. A propeptide spans 235–257 (SAILFSPPPVILLISLLILLIVG) (removed in mature form).

This sequence belongs to the prion family. In terms of assembly, monomer and homodimer. Has a tendency to aggregate into amyloid fibrils containing a cross-beta spine, formed by a steric zipper of superposed beta-strands. Soluble oligomers may represent an intermediate stage on the path to fibril formation. Copper binding may promote oligomerization. Interacts with GRB2, APP, ERI3/PRNPIP and SYN1. Mislocalized cytosolically exposed PrP interacts with MGRN1; this interaction alters MGRN1 subcellular location and causes lysosomal enlargement. Interacts with APP. Interacts with KIAA1191. Interacts with ADGRG6.

It localises to the cell membrane. The protein resides in the golgi apparatus. Its primary physiological function is unclear. May play a role in neuronal development and synaptic plasticity. May be required for neuronal myelin sheath maintenance. May promote myelin homeostasis through acting as an agonist for ADGRG6 receptor. May play a role in iron uptake and iron homeostasis. Soluble oligomers are toxic to cultured neuroblastoma cells and induce apoptosis (in vitro). Association with GPC1 (via its heparan sulfate chains) targets PRNP to lipid rafts. Also provides Cu(2+) or Zn(2+) for the ascorbate-mediated GPC1 deaminase degradation of its heparan sulfate side chains. This chain is Major prion protein (PRNP), found in Neovison vison (American mink).